We begin with the raw amino-acid sequence, 158 residues long: 14-3-3 protein gamma (158 aa).

Positions 1–158 (AAAMKNVTEL…TSDQQDDDGG (158 aa)) are interaction with SPATA18/MIEAP. A Phosphoserine modification is found at serine 48. Phosphotyrosine is present on tyrosine 60. Threonine 72 is modified (phosphothreonine). Serine 130 is modified (phosphoserine). Threonine 149 bears the Phosphothreonine mark. Serine 150 is modified (phosphoserine).

Belongs to the 14-3-3 family. As to quaternary structure, homodimer. Part of a complex that contains DSG3, PKP1, YAP1 and YWHAG; the complex is required for localization of DSG3 and YAP1 to the cell membrane in keratinocytes. Interacts with SAMSN1. Interacts with RAF1, SSH1 and CRTC2/TORC2. Interacts with ABL1 (phosphorylated form); the interaction retains it in the cytoplasm. Interacts with GAB2. Interacts with MDM4 (phosphorylated); negatively regulates MDM4 activity toward TP53. Interacts with PKA-phosphorylated AANAT and SIRT2. Interacts with the 'Thr-369' phosphorylated form of DAPK2. Interacts with PI4KB, TBC1D22A and TBC1D22B. Interacts with SLITRK1. Interacts with LRRK2; this interaction is dependent on LRRK2 phosphorylation. Interacts with MARK2 and MARK3. Interacts with MEFV. Interacts with ENDOG, TSC2 and PIK3C3; interaction with ENDOG weakens its interaction with TSC2 and PIK3C3. Interacts with (phosphorylated) WDR24. Interacts with BEST1; this interaction promotes L-glutamate channel activity leading to the positive regulation of NMDA glutamate receptor activity through the L-glutamate secretion. Interacts with PKP1 (when phosphorylated); the interaction results in translocation of PKP1 to the cytoplasm and loss of intercellular adhesion in keratinocytes. Interacts with SPATA18/MIEAP; a protein that also plays a role in MALM. Phosphorylated by various PKC isozymes.

Its subcellular location is the cytoplasm. The protein localises to the cytosol. It localises to the mitochondrion matrix. Its function is as follows. Adapter protein implicated in the regulation of a large spectrum of both general and specialized signaling pathways. Binds to a large number of partners, usually by recognition of a phosphoserine or phosphothreonine motif. Binding generally results in the modulation of the activity of the binding partner. Promotes inactivation of WDR24 component of the GATOR2 complex by binding to phosphorylated WDR24. Participates in the positive regulation of NMDA glutamate receptor activity by promoting the L-glutamate secretion through interaction with BEST1. Reduces keratinocyte intercellular adhesion, via interacting with PKP1 and sequestering it in the cytoplasm, thereby reducing its incorporation into desmosomes. Plays a role in mitochondrial protein catabolic process (also named MALM) that promotes the degradation of damaged proteins inside mitochondria. The polypeptide is 14-3-3 protein gamma (Ovis aries (Sheep)).